The primary structure comprises 357 residues: Alanine racemase (357 aa).

Catalysis depends on Lys-33, which acts as the Proton acceptor; specific for D-alanine. At Lys-33 the chain carries N6-(pyridoxal phosphate)lysine. Arg-129 is a substrate binding site. Tyr-253 serves as the catalytic Proton acceptor; specific for L-alanine. Met-301 is a substrate binding site.

The protein belongs to the alanine racemase family. The cofactor is pyridoxal 5'-phosphate.

The catalysed reaction is L-alanine = D-alanine. It functions in the pathway amino-acid biosynthesis; D-alanine biosynthesis; D-alanine from L-alanine: step 1/1. Functionally, catalyzes the interconversion of L-alanine and D-alanine. May also act on other amino acids. The protein is Alanine racemase (alr) of Pseudomonas syringae pv. syringae (strain B728a).